The following is a 291-amino-acid chain: Phytanoyl-CoA dioxygenase domain-containing protein 1 (291 aa).

Residue Thr-55 is modified to Phosphothreonine. Residues Lys-102, Met-141, 156–158 (HQD), and Trp-174 contribute to the 2-oxoglutarate site. Fe cation-binding residues include His-156 and Asp-158. Fe cation is bound at residue His-246. The 2-oxoglutarate site is built by Ser-248 and Arg-257.

It belongs to the PhyH family. PHYHD1 subfamily. Requires Fe cation as cofactor.

2-oxoglutarate(2OG)-dependent dioxygenase that catalyzes the conversion of 2-oxoglutarate to succinate and CO(2) in an iron-dependent manner. However, does not couple 2OG turnover to the hydroxylation of acyl-coenzyme A derivatives, implying that it is not directly involved in phytanoyl coenzyme-A metabolism. Does not show detectable activity towards fatty acid CoA thioesters. This Rattus norvegicus (Rat) protein is Phytanoyl-CoA dioxygenase domain-containing protein 1 (Phyhd1).